Reading from the N-terminus, the 462-residue chain is Sensor histidine kinase RegB (462 aa).

Residues 1–25 lie on the Cytoplasmic side of the membrane; sequence MILGPDGILNRDTRGDWVRLRTLIL. The helical transmembrane segment at 26–45 threads the bilayer; sequence LRWMAVAGQLAAIVVTDWYL. Over 46–51 the chain is Extracellular; sequence GVRLPM. Residues 52–70 traverse the membrane as a helical segment; it reads GLCFMAVGASVIANVIATF. Residues 71-78 are Cytoplasmic-facing; that stretch reads VFPQNRRL. Residues 79–96 form a helical membrane-spanning segment; that stretch reads TEFQALMILLFDLTQLSF. Residues 97 to 103 lie on the Extracellular side of the membrane; it reads LLFLTGG. The chain crosses the membrane as a helical span at residues 104–123; sequence LTNPFALLILAPVTISALAL. At 124–129 the chain is on the cytoplasmic side; the sequence is ELRTTV. Residues 130 to 149 traverse the membrane as a helical segment; that stretch reads ILGAIAIGLLTFTAYFHLPL. At 150–164 the chain is on the extracellular side; the sequence is ILADGSSLSVPRMFE. The helical transmembrane segment at 165 to 182 threads the bilayer; that stretch reads FGFWLAIVIGILFLGLYS. At 183 to 462 the chain is on the cytoplasmic side; it reads RRVAIEIRSM…PLGENVLIQT (280 aa). Positions 218-445 constitute a Histidine kinase domain; the sequence is AAAHELGTPL…IVEVIWPVDR (228 aa). Histidine 221 is modified (phosphohistidine; by autocatalysis).

The protein resides in the cell inner membrane. The enzyme catalyses ATP + protein L-histidine = ADP + protein N-phospho-L-histidine.. Its function is as follows. Member of the two-component regulatory system RegB/RegA. Involved in the positive regulation of photosynthesis gene expression in response to anaerobiosis. Also involved in positive regulation of the cbbI and cbbII Calvin cycle CO2 fixation operons, as well as in regulation of expression of genes involved in alternative CO2 fixation pathways. Phosphorylates RegA/PrrA. This Cereibacter sphaeroides (strain ATCC 17023 / DSM 158 / JCM 6121 / CCUG 31486 / LMG 2827 / NBRC 12203 / NCIMB 8253 / ATH 2.4.1.) (Rhodobacter sphaeroides) protein is Sensor histidine kinase RegB (regB).